Reading from the N-terminus, the 149-residue chain is Probable flagellum biosynthesis repressor protein FlbT (149 aa).

The protein belongs to the FlbT family.

In terms of biological role, has a post-transcriptional repressor function in flagellum biogenesis. Associates with the 5'-UTR of fljK mRNA and promotes its degradation. The polypeptide is Probable flagellum biosynthesis repressor protein FlbT (Rhizobium leguminosarum bv. trifolii (strain WSM2304)).